Reading from the N-terminus, the 306-residue chain is Ornithine carbamoyltransferase (306 aa).

Carbamoyl phosphate contacts are provided by residues 46–49 (STRT), Gln73, Arg97, and 124–127 (HPTQ). L-ornithine is bound by residues Asn156, Asp220, and 224-225 (SM). Residues 260-261 (CL) and Arg288 contribute to the carbamoyl phosphate site.

It belongs to the aspartate/ornithine carbamoyltransferase superfamily. OTCase family.

It localises to the cytoplasm. The enzyme catalyses carbamoyl phosphate + L-ornithine = L-citrulline + phosphate + H(+). It functions in the pathway amino-acid degradation; L-arginine degradation via ADI pathway; carbamoyl phosphate from L-arginine: step 2/2. Reversibly catalyzes the transfer of the carbamoyl group from carbamoyl phosphate (CP) to the N(epsilon) atom of ornithine (ORN) to produce L-citrulline. This chain is Ornithine carbamoyltransferase, found in Campylobacter jejuni subsp. doylei (strain ATCC BAA-1458 / RM4099 / 269.97).